The following is a 322-amino-acid chain: MAALVAAAALAAAEPPPAVPAAAGSGGPTSRRDFYWLRSFLAGSIAGCCAKTTVAPLDRVKVLLQAHNHHYKHLGVLSPLRAVPQKEGYLGLYKGNGAMMIRIFPYGAIQFMAFEHYKTFITTKLGVSGHVHRLMAGSMAGKMSMTAVICTYPLDVVRVRLAFQVKGEHTYSGIIHAFKTIYAKEGGFLGFYRGLMPTILGMAPYASVSFFTFGTLKSVGLSYAPTLLGRPSSDNPNVLVLKTHINLLCGGVARAIAQTISYPFDVTRRRMQLGAVLPEFEKCLTMRETMKYVYGHHGIRRGLYRGLSLNYIRCIPSQAVAF.

3 Solcar repeats span residues 34-120 (FYWL…YKTF), 128-219 (SGHV…LKSV), and 241-322 (LKTH…AVAF).

This sequence belongs to the mitochondrial carrier (TC 2.A.29) family.

It is found in the mitochondrion inner membrane. In terms of biological role, may be involved in the transport of coenzyme A in the mitochondrial matrix. Very little is known about the physiological function of this carrier. This chain is Solute carrier family 25 member 16, found in Rattus norvegicus (Rat).